The primary structure comprises 312 residues: MDIIFYHPTFDTQWWIEALRKAIPQARVRAWKSGDNVSADYALVWHPPVEMLAGRDLKAVFALGAGVDSILSKLQAHPEMLKPSVPLFRLEDTGMGEQMQEYAVSQVLHWFRRFDDYRIQQNSSHWQPLPEYHREDFTIGILGAGVLGSKVAQSLQTWRFPLRCWSRTRKSWPGVQSFAGREELSAFLSQCRVLINLLPNTPETVGIINQQLLEKLPDGAYLLNLARGVHVVEDDLLAALDSGKVKGAMLDVFNREPLPPESPLWQHPRVTITPHVAAITRPAEAVDYISRTIAQLEKGERVCGQVDRARGY.

R227 is an active-site residue. H275 acts as the Proton donor in catalysis.

It belongs to the D-isomer specific 2-hydroxyacid dehydrogenase family. GhrA subfamily.

It is found in the cytoplasm. It carries out the reaction glycolate + NADP(+) = glyoxylate + NADPH + H(+). It catalyses the reaction (R)-glycerate + NAD(+) = 3-hydroxypyruvate + NADH + H(+). The enzyme catalyses (R)-glycerate + NADP(+) = 3-hydroxypyruvate + NADPH + H(+). Catalyzes the NADPH-dependent reduction of glyoxylate and hydroxypyruvate into glycolate and glycerate, respectively. This Escherichia coli (strain SMS-3-5 / SECEC) protein is Glyoxylate/hydroxypyruvate reductase A.